A 105-amino-acid polypeptide reads, in one-letter code: Fe-S protein maturation auxiliary factor PG_1777 (105 aa).

It belongs to the Fe-S cluster assembly domain superfamily. MIP18-like family. Putative homodimer; may be disulfide-linked.

In terms of biological role, iron binding protein that protects DNA from Fenton chemistry-mediated damage caused by hydrogen peroxide induced oxidative stress. May be involved in iron-sulfur cluster assembly. The protein is Fe-S protein maturation auxiliary factor PG_1777 of Porphyromonas gingivalis (strain ATCC BAA-308 / W83).